The following is a 260-amino-acid chain: Proteasome subunit alpha (260 aa).

Belongs to the peptidase T1A family. In terms of assembly, the 20S proteasome core is composed of 14 alpha and 14 beta subunits that assemble into four stacked heptameric rings, resulting in a barrel-shaped structure. The two inner rings, each composed of seven catalytic beta subunits, are sandwiched by two outer rings, each composed of seven alpha subunits. The catalytic chamber with the active sites is on the inside of the barrel. Has a gated structure, the ends of the cylinder being occluded by the N-termini of the alpha-subunits. Is capped at one or both ends by the proteasome regulatory ATPase, PAN.

The protein localises to the cytoplasm. Its activity is regulated as follows. The formation of the proteasomal ATPase PAN-20S proteasome complex, via the docking of the C-termini of PAN into the intersubunit pockets in the alpha-rings, triggers opening of the gate for substrate entry. Interconversion between the open-gate and close-gate conformations leads to a dynamic regulation of the 20S proteasome proteolysis activity. Component of the proteasome core, a large protease complex with broad specificity involved in protein degradation. In Thermococcus onnurineus (strain NA1), this protein is Proteasome subunit alpha.